A 163-amino-acid polypeptide reads, in one-letter code: MKSTFLVVLELAFFLLPGRVLYAQKDSEDGGSHYSSDDCQVTPVIHVLQYPGCVPKPIPSFACIGRCASYIQVSGSKIWQMERSCMCCQESGEREASVSLFCPKAKNGEKKFRKVSTKAPLECMCRPCTGIEDANVIPQELTSFADEGTLTGYFQKSHYKSIE.

A signal peptide spans Met1 to Ala23. Disulfide bonds link Cys39–Cys88, Cys53–Cys102, Cys63–Cys123, Cys67–Cys125, and Cys85–Cys128. In terms of domain architecture, CTCK spans Cys39–Thr129.

In terms of assembly, heterodimer of burs and pburs.

The protein localises to the secreted. Final heterodimeric neurohormone released at the end of the molting cycle, involved in the sclerotization (tanning) of the insect cuticle, melanization and wing spreading. The protein is Bursicon (burs124) of Anopheles gambiae (African malaria mosquito).